A 502-amino-acid polypeptide reads, in one-letter code: Maturase K (502 aa).

The protein belongs to the intron maturase 2 family. MatK subfamily.

Its subcellular location is the plastid. It is found in the chloroplast. Usually encoded in the trnK tRNA gene intron. Probably assists in splicing its own and other chloroplast group II introns. Binds its homologous trnK precursor transcript. The polypeptide is Maturase K (Sinapis alba (White mustard)).